The sequence spans 657 residues: Translation factor GUF1, mitochondrial (657 aa).

The transit peptide at 1 to 39 (MRGCLQSVKWLTSALRPSQSLASSTRYPRRLLSTSAPRN) directs the protein to the mitochondrion. Positions 59 to 239 (ERFRNFCIVA…TVIEQIPAPV (181 aa)) constitute a tr-type G domain. GTP contacts are provided by residues 68–75 (AHVDHGKS), 132–136 (DTPGH), and 186–189 (NKVD).

Belongs to the TRAFAC class translation factor GTPase superfamily. Classic translation factor GTPase family. LepA subfamily.

It localises to the mitochondrion inner membrane. It carries out the reaction GTP + H2O = GDP + phosphate + H(+). Functionally, promotes mitochondrial protein synthesis. May act as a fidelity factor of the translation reaction, by catalyzing a one-codon backward translocation of tRNAs on improperly translocated ribosomes. Binds to mitochondrial ribosomes in a GTP-dependent manner. In Ajellomyces capsulatus (strain G186AR / H82 / ATCC MYA-2454 / RMSCC 2432) (Darling's disease fungus), this protein is Translation factor GUF1, mitochondrial.